Consider the following 145-residue polypeptide: Cytochrome c550 (145 aa).

Residues 1–24 (MNKNNVLRGLLVLAGLSLSSLALA) form the signal peptide. The region spanning 60-142 (LAVEIGASAY…AIRSYLESVH (83 aa)) is the Cytochrome c domain. Cys-73, Cys-76, His-77, and Met-119 together coordinate heme c.

As to quaternary structure, monomer. Interacts with the quinoprotein ethanol dehydrogenase (QEDH) ExaA. Binds 1 heme group per subunit.

Its subcellular location is the periplasm. Its pathway is alcohol metabolism; ethanol degradation; acetate from ethanol. Its function is as follows. Is an essential component of the ethanol oxidation system that allows P.aeruginosa to grow on ethanol as the sole carbon and energy source. Is the direct electron acceptor of the quinoprotein ethanol dehydrogenase (QEDH). This is Cytochrome c550 from Pseudomonas aeruginosa (strain ATCC 15692 / DSM 22644 / CIP 104116 / JCM 14847 / LMG 12228 / 1C / PRS 101 / PAO1).